The primary structure comprises 420 residues: UDP-N-acetylglucosamine 1-carboxyvinyltransferase (420 aa).

Residue 22–23 coordinates phosphoenolpyruvate; the sequence is KN. Residue Arg92 participates in UDP-N-acetyl-alpha-D-glucosamine binding. Residue Cys116 is the Proton donor of the active site. Cys116 is subject to 2-(S-cysteinyl)pyruvic acid O-phosphothioketal. UDP-N-acetyl-alpha-D-glucosamine contacts are provided by residues 121 to 125, Asp307, and Leu329; that span reads RPIDL.

Belongs to the EPSP synthase family. MurA subfamily.

The protein localises to the cytoplasm. It carries out the reaction phosphoenolpyruvate + UDP-N-acetyl-alpha-D-glucosamine = UDP-N-acetyl-3-O-(1-carboxyvinyl)-alpha-D-glucosamine + phosphate. Its pathway is cell wall biogenesis; peptidoglycan biosynthesis. In terms of biological role, cell wall formation. Adds enolpyruvyl to UDP-N-acetylglucosamine. The chain is UDP-N-acetylglucosamine 1-carboxyvinyltransferase from Nitratiruptor sp. (strain SB155-2).